The following is a 547-amino-acid chain: Chaperonin GroEL (547 aa).

Residues 30–33 (TLGP), Lys51, 87–91 (DGTTT), Gly415, and Asp495 each bind ATP.

It belongs to the chaperonin (HSP60) family. As to quaternary structure, forms a cylinder of 14 subunits composed of two heptameric rings stacked back-to-back. Interacts with the co-chaperonin GroES.

Its subcellular location is the cytoplasm. It catalyses the reaction ATP + H2O + a folded polypeptide = ADP + phosphate + an unfolded polypeptide.. Functionally, together with its co-chaperonin GroES, plays an essential role in assisting protein folding. The GroEL-GroES system forms a nano-cage that allows encapsulation of the non-native substrate proteins and provides a physical environment optimized to promote and accelerate protein folding. This is Chaperonin GroEL from Rhizobium leguminosarum bv. trifolii (strain WSM2304).